The following is a 131-amino-acid chain: Small ribosomal subunit protein uS8 (131 aa).

This sequence belongs to the universal ribosomal protein uS8 family. As to quaternary structure, part of the 30S ribosomal subunit. Contacts proteins S5 and S12.

One of the primary rRNA binding proteins, it binds directly to 16S rRNA central domain where it helps coordinate assembly of the platform of the 30S subunit. This Legionella pneumophila (strain Paris) protein is Small ribosomal subunit protein uS8.